Reading from the N-terminus, the 274-residue chain is 2,3,4,5-tetrahydropyridine-2,6-dicarboxylate N-succinyltransferase (274 aa).

Substrate contacts are provided by Arg106 and Asp143.

It belongs to the transferase hexapeptide repeat family. Homotrimer.

Its subcellular location is the cytoplasm. The enzyme catalyses (S)-2,3,4,5-tetrahydrodipicolinate + succinyl-CoA + H2O = (S)-2-succinylamino-6-oxoheptanedioate + CoA. It functions in the pathway amino-acid biosynthesis; L-lysine biosynthesis via DAP pathway; LL-2,6-diaminopimelate from (S)-tetrahydrodipicolinate (succinylase route): step 1/3. This Rickettsia rickettsii (strain Sheila Smith) protein is 2,3,4,5-tetrahydropyridine-2,6-dicarboxylate N-succinyltransferase.